The sequence spans 112 residues: UPF0145 protein MmarC6_1828 (112 aa).

The protein belongs to the UPF0145 family.

The polypeptide is UPF0145 protein MmarC6_1828 (Methanococcus maripaludis (strain C6 / ATCC BAA-1332)).